The sequence spans 257 residues: Type III pantothenate kinase (257 aa).

Position 6 to 13 (6 to 13) interacts with ATP; the sequence is DVGNTNTV. Substrate is bound by residues Tyr102 and 109 to 112; that span reads GADR. Asp111 acts as the Proton acceptor in catalysis. Asp131 lines the K(+) pocket. Thr134 serves as a coordination point for ATP. A substrate-binding site is contributed by Thr186.

This sequence belongs to the type III pantothenate kinase family. Homodimer. NH4(+) is required as a cofactor. It depends on K(+) as a cofactor.

It is found in the cytoplasm. It catalyses the reaction (R)-pantothenate + ATP = (R)-4'-phosphopantothenate + ADP + H(+). It functions in the pathway cofactor biosynthesis; coenzyme A biosynthesis; CoA from (R)-pantothenate: step 1/5. Catalyzes the phosphorylation of pantothenate (Pan), the first step in CoA biosynthesis. The polypeptide is Type III pantothenate kinase (Leptospira borgpetersenii serovar Hardjo-bovis (strain JB197)).